The following is a 289-amino-acid chain: Phosphate import ATP-binding protein PstB 2 (289 aa).

The ABC transporter domain occupies 37 to 276 (LHAKVEAFYY…HTPVIFQNPT (240 aa)). 69-76 (GPSGCGKS) contributes to the ATP binding site.

The protein belongs to the ABC transporter superfamily. Phosphate importer (TC 3.A.1.7) family. As to quaternary structure, the complex is composed of two ATP-binding proteins (PstB), two transmembrane proteins (PstC and PstA) and a solute-binding protein (PstS).

It is found in the cell inner membrane. The enzyme catalyses phosphate(out) + ATP + H2O = ADP + 2 phosphate(in) + H(+). Its function is as follows. Part of the ABC transporter complex PstSACB involved in phosphate import. Responsible for energy coupling to the transport system. In Trichormus variabilis (strain ATCC 29413 / PCC 7937) (Anabaena variabilis), this protein is Phosphate import ATP-binding protein PstB 2.